We begin with the raw amino-acid sequence, 338 residues long: Anthranilate phosphoribosyltransferase (338 aa).

5-phospho-alpha-D-ribose 1-diphosphate contacts are provided by residues Gly81, 84-85 (GD), Thr89, 91-94 (NIST), 109-117 (KHGNRNLSS), and Ala121. An anthranilate-binding site is contributed by Gly81. Ser93 is a binding site for Mg(2+). Anthranilate is bound at residue Asn112. Anthranilate is bound at residue Arg167. Residues Asp226 and Glu227 each contribute to the Mg(2+) site.

The protein belongs to the anthranilate phosphoribosyltransferase family. Homodimer. The cofactor is Mg(2+).

It catalyses the reaction N-(5-phospho-beta-D-ribosyl)anthranilate + diphosphate = 5-phospho-alpha-D-ribose 1-diphosphate + anthranilate. The protein operates within amino-acid biosynthesis; L-tryptophan biosynthesis; L-tryptophan from chorismate: step 2/5. In terms of biological role, catalyzes the transfer of the phosphoribosyl group of 5-phosphorylribose-1-pyrophosphate (PRPP) to anthranilate to yield N-(5'-phosphoribosyl)-anthranilate (PRA). This Cereibacter sphaeroides (strain ATCC 17029 / ATH 2.4.9) (Rhodobacter sphaeroides) protein is Anthranilate phosphoribosyltransferase.